Here is a 992-residue protein sequence, read N- to C-terminus: Meckelin (992 aa).

Positions methionine 1 to tryptophan 35 are cleaved as a signal peptide. Over alanine 36–aspartate 516 the chain is Extracellular. The segment at glutamine 37–glycine 280 is cysteine-rich. 12 disulfide bridges follow: cysteine 49–cysteine 62, cysteine 65–cysteine 78, cysteine 80–cysteine 97, cysteine 100–cysteine 114, cysteine 117–cysteine 127, cysteine 129–cysteine 150, cysteine 153–cysteine 170, cysteine 173–cysteine 184, cysteine 186–cysteine 197, cysteine 237–cysteine 246, cysteine 253–cysteine 268, and cysteine 354–cysteine 375. The N-linked (GlcNAc...) asparagine glycan is linked to asparagine 242. The helical transmembrane segment at alanine 517–arginine 545 threads the bilayer. The Cytoplasmic segment spans residues arginine 546–glutamine 555. Residues threonine 556–phenylalanine 587 form a helical membrane-spanning segment. The Extracellular segment spans residues lysine 588–proline 600. A helical transmembrane segment spans residues valine 601 to glutamine 628. At isoleucine 629–threonine 667 the chain is on the cytoplasmic side. An intramembrane region (helical) is located at residues tyrosine 668–glutamate 676. A discontinuously helical transmembrane segment spans residues tyrosine 668 to valine 698. Residues isoleucine 677–proline 685 lie within the membrane without spanning it. An intramembrane region (helical) is located at residues leucine 686–valine 698. Residues valine 699–leucine 728 lie on the Extracellular side of the membrane. Positions arginine 729–arginine 754 form an intramembrane region, helical. Residues arginine 729 to serine 768 traverse the membrane as a discontinuously helical segment. The stretch at phenylalanine 755 to lysine 759 is an intramembrane region. Residues isoleucine 760–serine 768 constitute an intramembrane region (helical). Over methionine 769–serine 923 the chain is Cytoplasmic. The segment at residues phenylalanine 924–serine 926 is an intramembrane region (helical). The discontinuously helical transmembrane segment at phenylalanine 924 to leucine 949 threads the bilayer. The stretch at valine 927–glutamate 933 is an intramembrane region. Positions alanine 934–leucine 949 form an intramembrane region, helical. The Extracellular portion of the chain corresponds to alanine 950–phenylalanine 954. Residues valine 955 to threonine 982 form a helical membrane-spanning segment. The Cytoplasmic segment spans residues lysine 983–isoleucine 992.

In terms of assembly, homodimer. Part of the tectonic-like complex (also named B9 complex). Interacts with DNAJB9, DNAJC10 and mutated SFTPC. Interacts with SYNE2 during the early establishment of cell polarity. Interacts (via C-terminus) with FLNA. Interacts with TMEM218. Interacts with WNT5A. Interacts with ROR2.

Its subcellular location is the cell membrane. It localises to the endoplasmic reticulum membrane. The protein localises to the cytoplasm. The protein resides in the cytoskeleton. It is found in the cilium basal body. Its function is as follows. Part of the tectonic-like complex which is required for tissue-specific ciliogenesis and may regulate ciliary membrane composition. Involved in centrosome migration to the apical cell surface during early ciliogenesis. Required for ciliary structure and function, including a role in regulating length and appropriate number through modulating centrosome duplication. Is a key regulator of stereociliary bundle orientation. Required for epithelial cell branching morphology. Essential for endoplasmic reticulum-associated degradation (ERAD) of surfactant protein C (sftpc). Involved in the negative regulation of canonical Wnt signaling, and activation of the non-canonical cascade stimulated by WNT5A. In non-canonical Wnt signaling, it may act as ROR2 coreceptor. This chain is Meckelin (Tmem67), found in Rattus norvegicus (Rat).